We begin with the raw amino-acid sequence, 97 residues long: MTDLRHYDVIVSPAITEKSTLVSENNQVVFNVAKQATKPEIKAAVEALFGVKVTAVNTLLRKGKTKRFRGFVGKQKDVKKAVVTLAEGQTIDVSTGL.

This sequence belongs to the universal ribosomal protein uL23 family. In terms of assembly, part of the 50S ribosomal subunit. Contacts protein L29, and trigger factor when it is bound to the ribosome.

In terms of biological role, one of the early assembly proteins it binds 23S rRNA. One of the proteins that surrounds the polypeptide exit tunnel on the outside of the ribosome. Forms the main docking site for trigger factor binding to the ribosome. The protein is Large ribosomal subunit protein uL23 of Rhizobium etli (strain CIAT 652).